A 148-amino-acid polypeptide reads, in one-letter code: Early glycoprotein GP48 (148 aa).

Positions 1 to 21 (MMLRAWRLMVLLAAYCYYVFA) are cleaved as a signal peptide. 10 N-linked (GlcNAc...) asparagine; by host glycosylation sites follow: asparagine 22, asparagine 44, asparagine 49, asparagine 57, asparagine 65, asparagine 104, asparagine 108, asparagine 118, asparagine 135, and asparagine 144.

The protein belongs to the RL11 family. In terms of processing, N-glycosylated and possibly O-glycosylated.

It localises to the virion membrane. This is Early glycoprotein GP48 (UL4) from Homo sapiens (Human).